The sequence spans 395 residues: 8-amino-7-oxononanoate synthase (395 aa).

R24 is a substrate binding site. 111-112 is a binding site for pyridoxal 5'-phosphate; sequence GF. H136 provides a ligand contact to substrate. Pyridoxal 5'-phosphate is bound by residues S184, 209-212, and 240-243; these read DDAH and TLSK. The residue at position 243 (K243) is an N6-(pyridoxal phosphate)lysine. Residue T357 coordinates substrate.

This sequence belongs to the class-II pyridoxal-phosphate-dependent aminotransferase family. BioF subfamily. In terms of assembly, homodimer. Requires pyridoxal 5'-phosphate as cofactor.

The catalysed reaction is 6-carboxyhexanoyl-[ACP] + L-alanine + H(+) = (8S)-8-amino-7-oxononanoate + holo-[ACP] + CO2. The protein operates within cofactor biosynthesis; biotin biosynthesis. Catalyzes the decarboxylative condensation of pimeloyl-[acyl-carrier protein] and L-alanine to produce 8-amino-7-oxononanoate (AON), [acyl-carrier protein], and carbon dioxide. In Thermoanaerobacter pseudethanolicus (strain ATCC 33223 / 39E) (Clostridium thermohydrosulfuricum), this protein is 8-amino-7-oxononanoate synthase.